The sequence spans 136 residues: Ribosome-binding factor A (136 aa).

It belongs to the RbfA family. As to quaternary structure, monomer. Binds 30S ribosomal subunits, but not 50S ribosomal subunits or 70S ribosomes.

It is found in the cytoplasm. Its function is as follows. One of several proteins that assist in the late maturation steps of the functional core of the 30S ribosomal subunit. Associates with free 30S ribosomal subunits (but not with 30S subunits that are part of 70S ribosomes or polysomes). Required for efficient processing of 16S rRNA. May interact with the 5'-terminal helix region of 16S rRNA. The protein is Ribosome-binding factor A of Rhodopseudomonas palustris (strain BisB5).